The chain runs to 151 residues: Large ribosomal subunit protein bL9 (151 aa).

This sequence belongs to the bacterial ribosomal protein bL9 family.

In terms of biological role, binds to the 23S rRNA. The polypeptide is Large ribosomal subunit protein bL9 (Bordetella avium (strain 197N)).